The sequence spans 191 residues: Dephospho-CoA kinase (191 aa).

The DPCK domain occupies 3–191 (AIGITGSYAS…KLIKDLECRV (189 aa)). Position 11–16 (11–16 (ASGKTF)) interacts with ATP.

It belongs to the CoaE family.

It localises to the cytoplasm. It carries out the reaction 3'-dephospho-CoA + ATP = ADP + CoA + H(+). Its pathway is cofactor biosynthesis; coenzyme A biosynthesis; CoA from (R)-pantothenate: step 5/5. Functionally, catalyzes the phosphorylation of the 3'-hydroxyl group of dephosphocoenzyme A to form coenzyme A. The protein is Dephospho-CoA kinase of Rickettsia prowazekii (strain Madrid E).